A 369-amino-acid chain; its full sequence is MRPLWLLTLLLALSQALPFEQKGFWDFTLDDGLLMMNDEEASGSDTTSGVPDLDSLTPTFSAMCPFGCHCHLRVVQCSDLGLKTVPKEISPDTTLLDLQNNDISELRKDDFKGLQHLYALVLVNNKISKIHEKAFSPLRKLQKLYISKNHLVEIPPNLPSSLVELRIHDNRIRKVPKGVFSGLRNMNCIEMGGNPLENSGFEPGAFDGLKLNYLRISEAKLTGIPKDLPETLNELHLDHNKIQAIELEDLLRYSKLYRLGLGHNQIRMIENGSLSFLPTLRELHLDNNKLSRVPAGLPDLKLLQVVYLHSNNITKVGINDFCPMGFGVKRAYYNGISLFNNPVPYWEVQPATFRCVTDRLAIQFGNYKK.

A signal peptide spans 1–16 (MRPLWLLTLLLALSQA). Residues 17–37 (LPFEQKGFWDFTLDDGLLMMN) constitute a propeptide that is removed on maturation. Residues Ser-42 and Ser-48 are each glycosylated (O-linked (Xyl...) (glycosaminoglycan) serine). Cystine bridges form between Cys-64-Cys-70 and Cys-68-Cys-77. LRR repeat units follow at residues 83-103 (KTVP…NNDI), 104-127 (SELR…NNKI), 128-151 (SKIH…KNHL), 152-172 (VEIP…DNRI), 173-196 (RKVP…GNPL), 197-221 (ENSG…EAKL), 222-242 (TGIP…HNKI), 243-266 (QAIE…HNQI), 267-290 (RMIE…NNKL), 291-313 (SRVP…SNNI), 314-343 (TKVG…NNPV), and 344-369 (PYWE…NYKK). Asn-271 and Asn-312 each carry an N-linked (GlcNAc...) asparagine glycan. Cys-322 and Cys-355 form a disulfide bridge.

The protein belongs to the small leucine-rich proteoglycan (SLRP) family. SLRP class I subfamily. Homodimer. Forms a ternary complex with MFAP2 and ELN. Post-translationally, the two attached glycosaminoglycan chains can be either chondroitin sulfate or dermatan sulfate. In terms of tissue distribution, found in several connective tissues, especially in articular cartilages.

It localises to the secreted. The protein resides in the extracellular space. It is found in the extracellular matrix. Its function is as follows. May be involved in collagen fiber assembly. This Rattus norvegicus (Rat) protein is Biglycan (Bgn).